The following is a 391-amino-acid chain: D-xylose 1-dehydrogenase (NADP(+)) (391 aa).

Belongs to the Gfo/Idh/MocA family.

The enzyme catalyses D-xylose + NADP(+) = D-xylono-1,5-lactone + NADPH + H(+). In terms of biological role, NADP-dependent D-xylose dehydrogenase catalyzing the oxydation of D-xylose into D-xylonolactone. Also displays some, albeit lower activity with D-glucose, D-galactose and L-arabinose as substrate. Probably not involved in D-xylose degradation, as it has been shown that H.jecorina assimilates D-xylose via D-xylose reductase and xylitol dehydrogenase, and it is unable to grow on D-xylonic acid as sole carbon source. May play a role in the regeneration of NADP(+) in the presence of D-xylose. This Hypocrea jecorina (strain ATCC 56765 / BCRC 32924 / NRRL 11460 / Rut C-30) (Trichoderma reesei) protein is D-xylose 1-dehydrogenase (NADP(+)).